Reading from the N-terminus, the 398-residue chain is Riboflavin transporter RfnT (398 aa).

The next 12 helical transmembrane spans lie at 13–35 (ILTI…GGLV), 45–67 (LVTL…AAFF), 74–91 (RNAY…GVIA), 95–117 (IFAA…ASYV), 137–156 (ISWV…QLVI), 166–188 (MFAG…LFML), 220–242 (VAAG…IAMV), 252–274 (ALGI…KLIT), 281–300 (ITAL…LGGF), 305–324 (FWGA…IGAT), 345–367 (FIMF…SSGW), and 372–389 (WLVF…ILRL).

Belongs to the major facilitator superfamily.

It is found in the cell membrane. Its function is as follows. Transports riboflavin into the cell. In Brucella anthropi (strain ATCC 49188 / DSM 6882 / CCUG 24695 / JCM 21032 / LMG 3331 / NBRC 15819 / NCTC 12168 / Alc 37) (Ochrobactrum anthropi), this protein is Riboflavin transporter RfnT.